Consider the following 322-residue polypeptide: Phospho-N-acetylmuramoyl-pentapeptide-transferase (322 aa).

10 helical membrane-spanning segments follow: residues 6–26 (ASCI…PLLI), 54–74 (TMGG…VTAW), 82–102 (VWIL…DDGI), 122–142 (IIIA…FGLY), 145–165 (FAGV…WLVG), 176–196 (LDGL…YIAF), 200–220 (NFAI…FFIF), 227–247 (IFMG…VSIM), 255–275 (LLVG…VISF), and 302–322 (VDIV…AIWG).

The protein belongs to the glycosyltransferase 4 family. MraY subfamily. It depends on Mg(2+) as a cofactor.

It localises to the cell membrane. The enzyme catalyses UDP-N-acetyl-alpha-D-muramoyl-L-alanyl-gamma-D-glutamyl-L-lysyl-D-alanyl-D-alanine + di-trans,octa-cis-undecaprenyl phosphate = Mur2Ac(oyl-L-Ala-gamma-D-Glu-L-Lys-D-Ala-D-Ala)-di-trans,octa-cis-undecaprenyl diphosphate + UMP. Its pathway is cell wall biogenesis; peptidoglycan biosynthesis. In terms of biological role, catalyzes the initial step of the lipid cycle reactions in the biosynthesis of the cell wall peptidoglycan: transfers peptidoglycan precursor phospho-MurNAc-pentapeptide from UDP-MurNAc-pentapeptide onto the lipid carrier undecaprenyl phosphate, yielding undecaprenyl-pyrophosphoryl-MurNAc-pentapeptide, known as lipid I. In Lactobacillus helveticus (strain DPC 4571), this protein is Phospho-N-acetylmuramoyl-pentapeptide-transferase.